Here is a 314-residue protein sequence, read N- to C-terminus: Methionyl-tRNA formyltransferase (314 aa).

Residue 112-115 (SLLP) participates in (6S)-5,6,7,8-tetrahydrofolate binding.

The protein belongs to the Fmt family.

It carries out the reaction L-methionyl-tRNA(fMet) + (6R)-10-formyltetrahydrofolate = N-formyl-L-methionyl-tRNA(fMet) + (6S)-5,6,7,8-tetrahydrofolate + H(+). In terms of biological role, attaches a formyl group to the free amino group of methionyl-tRNA(fMet). The formyl group appears to play a dual role in the initiator identity of N-formylmethionyl-tRNA by promoting its recognition by IF2 and preventing the misappropriation of this tRNA by the elongation apparatus. This Legionella pneumophila subsp. pneumophila (strain Philadelphia 1 / ATCC 33152 / DSM 7513) protein is Methionyl-tRNA formyltransferase.